A 125-amino-acid chain; its full sequence is Type-4 ice-structuring protein (125 aa).

An N-terminal signal peptide occupies residues 1 to 20 (MKYTLIAAIVVLALAQGTLA).

The protein belongs to the apolipoprotein A1/A4/E family.

Its subcellular location is the secreted. Functionally, antifreeze proteins lower the blood freezing point. The sequence is that of Type-4 ice-structuring protein from Gadus morhua (Atlantic cod).